The chain runs to 326 residues: Tetraketide alpha-pyrone reductase 1 (326 aa).

NADP(+) is bound by residues 8–32 (VCVT…GYEV), K44, and Y162.

Belongs to the NAD(P)-dependent epimerase/dehydratase family. Dihydroflavonol-4-reductase subfamily. As to quaternary structure, interacts with 4CLL1/ACOS5, PKSA and PKSB. As to expression, specifically expressed in anther tapetal cells during microspores development.

The protein resides in the cytoplasm. It localises to the nucleus. Its subcellular location is the endoplasmic reticulum. In terms of biological role, involved in the biosynthesis of hydroxylated tetraketide compounds that serve as sporopollenin precursors (the main constituents of exine). Is essential for pollen wall development. Acts on tetraketide alpha-pyrones and reduces the carbonyl function on the tetraketide alkyl chain to a secondary alcohol function. This is Tetraketide alpha-pyrone reductase 1 (TKPR1) from Arabidopsis thaliana (Mouse-ear cress).